A 355-amino-acid polypeptide reads, in one-letter code: UDP-N-acetylglucosamine--N-acetylmuramyl-(pentapeptide) pyrophosphoryl-undecaprenol N-acetylglucosamine transferase (355 aa).

UDP-N-acetyl-alpha-D-glucosamine is bound by residues 15-17 (TGG), asparagine 127, arginine 163, serine 191, isoleucine 244, 263-268 (ALTVSE), and glutamine 288.

Belongs to the glycosyltransferase 28 family. MurG subfamily.

The protein localises to the cell inner membrane. It carries out the reaction di-trans,octa-cis-undecaprenyl diphospho-N-acetyl-alpha-D-muramoyl-L-alanyl-D-glutamyl-meso-2,6-diaminopimeloyl-D-alanyl-D-alanine + UDP-N-acetyl-alpha-D-glucosamine = di-trans,octa-cis-undecaprenyl diphospho-[N-acetyl-alpha-D-glucosaminyl-(1-&gt;4)]-N-acetyl-alpha-D-muramoyl-L-alanyl-D-glutamyl-meso-2,6-diaminopimeloyl-D-alanyl-D-alanine + UDP + H(+). Its pathway is cell wall biogenesis; peptidoglycan biosynthesis. Functionally, cell wall formation. Catalyzes the transfer of a GlcNAc subunit on undecaprenyl-pyrophosphoryl-MurNAc-pentapeptide (lipid intermediate I) to form undecaprenyl-pyrophosphoryl-MurNAc-(pentapeptide)GlcNAc (lipid intermediate II). The sequence is that of UDP-N-acetylglucosamine--N-acetylmuramyl-(pentapeptide) pyrophosphoryl-undecaprenol N-acetylglucosamine transferase from Escherichia coli (strain 55989 / EAEC).